Reading from the N-terminus, the 595-residue chain is Cardiolipin synthase (CMP-forming) / mitochondrial hydrolase fusion protein (595 aa).

Residues 1-24 (MLHTINYRSWHLAARQLGRSTFRK) constitute a mitochondrion transit peptide. 2 helical membrane passes run 538 to 560 (ALQL…ASFA) and 564 to 586 (LFYI…RNTF).

The protein in the N-terminal section; belongs to the HAD-like hydrolase superfamily. This sequence in the C-terminal section; belongs to the CDP-alcohol phosphatidyltransferase class-I family. Mg(2+) is required as a cofactor. In terms of processing, proteolytically cleaved, presumably during its import into the mitochondrion by mitochondrial processing peptidase.

Its subcellular location is the mitochondrion. It localises to the mitochondrion inner membrane. It carries out the reaction a CDP-1,2-diacyl-sn-glycerol + a 1,2-diacyl-sn-glycero-3-phospho-(1'-sn-glycerol) = a cardiolipin + CMP + H(+). Its function is as follows. Catalyzes the synthesis of cardiolipin (CL) (diphosphatidylglycerol) by specifically transferring a phosphatidyl group from CDP-diacylglycerol to phosphatidylglycerol (PG). CL is a key phospholipid in mitochondrial membranes and plays important roles in maintaining the functional integrity and dynamics of mitochondria under both optimal and stress conditions. In terms of biological role, activity is dispensable for viability. This is Cardiolipin synthase (CMP-forming) / mitochondrial hydrolase fusion protein from Schizosaccharomyces pombe (strain 972 / ATCC 24843) (Fission yeast).